We begin with the raw amino-acid sequence, 1068 residues long: Probable ATPase FE772_23070 (1068 aa).

217–224 (GGGGAGKT) contributes to the ATP binding site.

Involved in defense against bacteriophages. When this probable 4 gene operon (bGSDM-FE772_23060-FE772_23065-FE772_23070) is inserted into E.coli it provides nearly 100-fold protection against phages T5 and T6 and about 8-fold against phage T4. The operon without bGSDM no longer protects against phage. Probably a nucleotide hydrolase, possibly of ATP. This Lysobacter enzymogenes protein is Probable ATPase FE772_23070.